Consider the following 174-residue polypeptide: B3 domain-containing protein At2g31862 (174 aa).

The TF-B3 DNA-binding region spans 1 to 71 (MWVNLSCMCH…KLYIALVPLD (71 aa)).

It is found in the nucleus. This Arabidopsis thaliana (Mouse-ear cress) protein is B3 domain-containing protein At2g31862.